A 265-amino-acid chain; its full sequence is Protein HesA, vegetative (265 aa).

Belongs to the HesA/MoeB/ThiF family.

This chain is Protein HesA, vegetative (hesA2), found in Trichormus variabilis (strain ATCC 29413 / PCC 7937) (Anabaena variabilis).